The chain runs to 134 residues: MSSEDVKYFTRAEVAKNNTKDKNWFIIHNNVYDVTAFLNEHPGGEEVLIEQAGKDATEHFEDVGHSSDAREMMKQYKVGELVAEERSNVPEKSEPTWNTEQKTEESSMKSWLMPFVLGLVATLIYKFFFGTKSQ.

Residues 6–82 enclose the Cytochrome b5 heme-binding domain; the sequence is VKYFTRAEVA…MKQYKVGELV (77 aa). The heme site is built by histidine 41 and histidine 65. Residues 111-131 traverse the membrane as a helical segment; it reads WLMPFVLGLVATLIYKFFFGT.

The protein belongs to the cytochrome b5 family.

The protein resides in the endoplasmic reticulum membrane. It is found in the microsome membrane. Functionally, cytochrome b5 is a membrane bound hemoprotein which function as an electron carrier for several membrane bound oxygenases. The sequence is that of Cytochrome b5 (Cyt-b5) from Musca domestica (House fly).